A 1240-amino-acid polypeptide reads, in one-letter code: DNA polymerase catalytic subunit (1240 aa).

The span at 1 to 22 (MFCAAGGPASPGGKPAARAASG) shows a compositional bias: low complexity. Disordered regions lie at residues 1–44 (MFCA…RRQN), 646–695 (GLDK…RETG), and 1103–1139 (AAAP…ASKP). The span at 669 to 688 (NGDEDKDDDEDGDEDGDERE) shows a compositional bias: acidic residues.

The protein belongs to the DNA polymerase type-B family. Forms a complex with the ssDNA-binding protein UL29, the DNA polymerase processivity factor, and the alkaline exonuclease. Interacts with the putative helicase-primase complex subunit UL8; this interaction may coordinate leading and lagging strand DNA synthesis at the replication fork.

It localises to the host nucleus. The enzyme catalyses DNA(n) + a 2'-deoxyribonucleoside 5'-triphosphate = DNA(n+1) + diphosphate. The catalysed reaction is Endonucleolytic cleavage to 5'-phosphomonoester.. In terms of biological role, replicates viral genomic DNA. The replication complex is composed of six viral proteins: the DNA polymerase, processivity factor, primase, primase-associated factor, helicase, and ssDNA-binding protein. Additionally, the polymerase contains an intrinsic ribonuclease H (RNase H) activity that specifically degrades RNA/DNA heteroduplexes or duplex DNA substrates in the 5' to 3' direction. Therefore, it can catalyze the excision of the RNA primers that initiate the synthesis of Okazaki fragments at a replication fork during viral DNA replication. The polypeptide is DNA polymerase catalytic subunit (Human herpesvirus 2 (strain HG52) (HHV-2)).